A 378-amino-acid chain; its full sequence is MEVAELGFPETAVSQSRICLCAVLCGHWDFADMMVIRSLSLIRLEGVEGRDPVGGGNLTNKRPSCAPSPQDLSAQWKQLEDRGASSRRVDMAALFQEASSCPVCSDYLEKPMSLECGCAVCLKCINSLQKEPHGEDLLCCCSSMVSRKNKIRRNRQLERLASHIKELEPKLKKILQMNPRMRKFQVDMTLDANTANNFLLISDDLRSVRSGRIRQNRQDLAERFDVSVCILGSPRFTCGRHCWEVDVGTSTEWDLGVCRESVHRKGRIQLTTELGFWTVSLRDGGRLSATTVPLTFLFVDRKLQRVGIFLDMGMQNVSFFDAESGSHVYTFRSVSAEEPLRPFLAPSVPPNGDQGVLSICPLMNSGTTDAPVRPGEAK.

The segment at 101-143 (CPVCSDYLEKPMSLECGCAVCLKCINSLQKEPHGEDLLCCCSS) adopts an RING-type; degenerate zinc-finger fold. Positions 168–362 (EPKLKKILQM…DQGVLSICPL (195 aa)) constitute a B30.2/SPRY domain.

As to expression, seems to be expressed in prostate and less abundantly in adult brain, fetal liver, and fetal kidney.

This is Ret finger protein-like 2 (RFPL2) from Homo sapiens (Human).